The sequence spans 359 residues: Phospho-N-acetylmuramoyl-pentapeptide-transferase (359 aa).

Helical transmembrane passes span Gln-3–Ile-23, Val-55–Phe-75, Ile-80–Leu-100, Thr-117–Phe-137, Ile-156–Ala-176, Leu-187–Phe-207, Leu-231–Ala-251, Ile-255–Thr-275, Ile-280–Ile-300, and Phe-334–Leu-354.

It belongs to the glycosyltransferase 4 family. MraY subfamily. Mg(2+) serves as cofactor.

It is found in the cell membrane. It carries out the reaction UDP-N-acetyl-alpha-D-muramoyl-L-alanyl-gamma-D-glutamyl-meso-2,6-diaminopimeloyl-D-alanyl-D-alanine + di-trans,octa-cis-undecaprenyl phosphate = di-trans,octa-cis-undecaprenyl diphospho-N-acetyl-alpha-D-muramoyl-L-alanyl-D-glutamyl-meso-2,6-diaminopimeloyl-D-alanyl-D-alanine + UMP. Its pathway is cell wall biogenesis; peptidoglycan biosynthesis. Functionally, catalyzes the initial step of the lipid cycle reactions in the biosynthesis of the cell wall peptidoglycan: transfers peptidoglycan precursor phospho-MurNAc-pentapeptide from UDP-MurNAc-pentapeptide onto the lipid carrier undecaprenyl phosphate, yielding undecaprenyl-pyrophosphoryl-MurNAc-pentapeptide, known as lipid I. The polypeptide is Phospho-N-acetylmuramoyl-pentapeptide-transferase (Mycobacterium avium (strain 104)).